We begin with the raw amino-acid sequence, 351 residues long: Cytoplasmic dynein 2 light intermediate chain 1 (351 aa).

The protein belongs to the dynein light intermediate chain family. As to quaternary structure, light intermediate chain of the cytoplasmic dynein complex 2, a multisubunit complex composed at least of eleven different proteins. The cytoplasmic dynein 2 complex consists of two catalytic heavy chains (HCs) and a number of non-catalytic subunits presented by intermediate chains (ICs), light intermediate chains (LICs) and light chains (LCs). Among them, a heavy chain (DYNC2H1), two intermediate chains (DYNC2I2 and DYNC2I1), a light intermediate chain (DYNC2LI1), and a light chain (DYNLT2B) are unique to the dynein-2 complex, but a subset of light chains are also shared by dynein-1 and dynein-2 complexes. Dynein-2 complex is built around two copies of cytoplasmic dynein 2 heavy chain 1 (DYNC2H1). The C-terminal region of DYNC2H1 forms the motor domain, which converts the energy from ATP hydrolysis into movement. Its N-terminal region forms the tail, an extended structure that binds the other subunits and holds the two heavy chains in a homodimer. Interacts with DYNC2H1 (via N-terminus); this interaction stabilizes the dynein-2 complex structure. Expressed in bone, brain, kidney, and cartilage. Lower expression in heart, liver, lung, placenta and thymus.

Its subcellular location is the golgi apparatus. The protein resides in the cytoplasm. It is found in the cell projection. The protein localises to the cilium. It localises to the cytoskeleton. Its subcellular location is the cilium basal body. The protein resides in the cilium axoneme. It is found in the microtubule organizing center. The protein localises to the centrosome. In terms of biological role, acts as one of several non-catalytic accessory components of the cytoplasmic dynein 2 complex (dynein-2 complex), a motor protein complex that drives the movement of cargos along microtubules within cilia and flagella in concert with the intraflagellar transport (IFT) system, facilitating the assembly of these organelles. Involved in the regulation of ciliary length. This is Cytoplasmic dynein 2 light intermediate chain 1 (DYNC2LI1) from Homo sapiens (Human).